Reading from the N-terminus, the 150-residue chain is MFDVLVYLYENYWQPDACPDHRQLSRKLSAVGFENEEIEDALSWLDGLATAAESHSGEQSAHALRVYSPMEQEHLGEASIGFVSFLESAGVLRAPMREMVIDRAMAIPAGPLAVEDLKIIVLMVFWSLGEEPDALILDELFVDDEDRLIH.

This sequence belongs to the Smg family.

This Methylibium petroleiphilum (strain ATCC BAA-1232 / LMG 22953 / PM1) protein is Protein Smg homolog.